Consider the following 140-residue polypeptide: Histone H2B (140 aa).

The segment covering 1 to 10 (MPPKAAEKKP) has biased composition (basic and acidic residues). The interval 1–48 (MPPKAAEKKPTTGGKAPAGKAPAEKKEAGKKTAAAASGDKKKRGKTRK) is disordered. Residues Lys8 and Lys9 each carry the N6-acetyllysine; alternate modification. Glycyl lysine isopeptide (Lys-Gly) (interchain with G-Cter in SUMO); alternate cross-links involve residues Lys8 and Lys9. Residues 11–21 (TTGGKAPAGKA) are compositionally biased toward low complexity. Residue Lys15 is modified to N6-acetyllysine. Lys25 is subject to N6-acetyllysine; alternate. Residue Lys25 forms a Glycyl lysine isopeptide (Lys-Gly) (interchain with G-Cter in SUMO); alternate linkage. Lys26 is covalently cross-linked (Glycyl lysine isopeptide (Lys-Gly) (interchain with G-Cter in SUMO)). A Glycyl lysine isopeptide (Lys-Gly) (interchain with G-Cter in ubiquitin) cross-link involves residue Lys134.

This sequence belongs to the histone H2B family. In terms of assembly, the nucleosome is a histone octamer containing two molecules each of H2A, H2B, H3 and H4 assembled in one H3-H4 heterotetramer and two H2A-H2B heterodimers. The octamer wraps approximately 147 bp of DNA. Post-translationally, monoubiquitinated by the ubc2-bre1 complex to form H2BK123ub1. H2BK123ub1 gives a specific tag for epigenetic transcriptional activation and is also prerequisite for H3K4me and H3K79me formation. H2BK123ub1 also modulates the formation of double-strand breaks during meiosis and is a prerequisite for DNA-damage checkpoint activation. In terms of processing, acetylated by gcn5 to form H2BK11ac and H2BK16ac. H2BK16ac can also be formed by esa1. Acetylation of N-terminal lysines and particularly formation of H2BK11acK16ac has a positive effect on transcription. Sumoylation to form H2BK6su or H2BK7su, and probably also H2BK16su or H2BK17su, occurs preferentially near the telomeres and represses gene transcription.

Its subcellular location is the nucleus. The protein localises to the chromosome. In terms of biological role, core component of nucleosome. Nucleosomes wrap and compact DNA into chromatin, limiting DNA accessibility to the cellular machineries which require DNA as a template. Histones thereby play a central role in transcription regulation, DNA repair, DNA replication and chromosomal stability. DNA accessibility is regulated via a complex set of post-translational modifications of histones, also called histone code, and nucleosome remodeling. The polypeptide is Histone H2B (htb1) (Aspergillus terreus (strain NIH 2624 / FGSC A1156)).